Reading from the N-terminus, the 127-residue chain is Aspartate 1-decarboxylase (127 aa).

Residue Ser25 is the Schiff-base intermediate with substrate; via pyruvic acid of the active site. Position 25 is a pyruvic acid (Ser) (Ser25). Thr57 is a substrate binding site. The active-site Proton donor is the Tyr58. 73–75 (GAA) contacts substrate.

Belongs to the PanD family. As to quaternary structure, heterooctamer of four alpha and four beta subunits. Pyruvate serves as cofactor. Post-translationally, is synthesized initially as an inactive proenzyme, which is activated by self-cleavage at a specific serine bond to produce a beta-subunit with a hydroxyl group at its C-terminus and an alpha-subunit with a pyruvoyl group at its N-terminus.

It is found in the cytoplasm. It carries out the reaction L-aspartate + H(+) = beta-alanine + CO2. Its pathway is cofactor biosynthesis; (R)-pantothenate biosynthesis; beta-alanine from L-aspartate: step 1/1. Functionally, catalyzes the pyruvoyl-dependent decarboxylation of aspartate to produce beta-alanine. The chain is Aspartate 1-decarboxylase from Staphylococcus aureus (strain JH1).